The following is a 546-amino-acid chain: (+)-epi-alpha-bisabolol synthase (546 aa).

Residues aspartate 297, aspartate 301, aspartate 441, threonine 445, and glutamate 449 each coordinate Mg(2+). The short motif at 297 to 301 (DDIYD) is the DDXXD motif element.

The protein belongs to the terpene synthase family. Mg(2+) is required as a cofactor.

The catalysed reaction is (2E,6E)-farnesyl diphosphate + H2O = (+)-epi-alpha-bisabolol + diphosphate. It participates in secondary metabolite biosynthesis; terpenoid biosynthesis. In terms of biological role, sesquiterpene synthase involved in the biosynthesis of (+)-epi-alpha-bisabolol, a precursor of the natural sweetner hernandulcin. The sequence is that of (+)-epi-alpha-bisabolol synthase from Phyla dulcis (Aztec sweet herb).